Here is a 403-residue protein sequence, read N- to C-terminus: 4-hydroxy-3-methylbut-2-en-1-yl diphosphate synthase (ferredoxin) (403 aa).

Positions 312, 315, 346, and 353 each coordinate [4Fe-4S] cluster.

The protein belongs to the IspG family. Requires [4Fe-4S] cluster as cofactor.

The enzyme catalyses (2E)-4-hydroxy-3-methylbut-2-enyl diphosphate + 2 oxidized [2Fe-2S]-[ferredoxin] + H2O = 2-C-methyl-D-erythritol 2,4-cyclic diphosphate + 2 reduced [2Fe-2S]-[ferredoxin] + H(+). It functions in the pathway isoprenoid biosynthesis; isopentenyl diphosphate biosynthesis via DXP pathway; isopentenyl diphosphate from 1-deoxy-D-xylulose 5-phosphate: step 5/6. Functionally, converts 2C-methyl-D-erythritol 2,4-cyclodiphosphate (ME-2,4cPP) into 1-hydroxy-2-methyl-2-(E)-butenyl 4-diphosphate. The protein is 4-hydroxy-3-methylbut-2-en-1-yl diphosphate synthase (ferredoxin) of Synechocystis sp. (strain ATCC 27184 / PCC 6803 / Kazusa).